We begin with the raw amino-acid sequence, 317 residues long: HTH-type transcriptional repressor PA14_22550 (317 aa).

Residues 1-59 (MDKLTAMATFVKVVDAGSFTRAADALGLPKARVSQRVSDLEKHLGVRLLNRTTRALSLT) enclose the HTH lysR-type domain. Residues 19-38 (FTRAADALGLPKARVSQRVS) constitute a DNA-binding region (H-T-H motif).

The protein belongs to the LysR transcriptional regulatory family.

In terms of biological role, represses the transcription of the operon that consists of PA14_22510 to PA14_22540. This Pseudomonas aeruginosa (strain UCBPP-PA14) protein is HTH-type transcriptional repressor PA14_22550.